The following is a 523-amino-acid chain: Cytochrome P450 monooxygenase ple1 (523 aa).

Residues 9–29 (ALPVLAIWAAIGLAYWIDSQK) traverse the membrane as a helical segment. N-linked (GlcNAc...) asparagine glycosylation occurs at asparagine 141. Cysteine 444 provides a ligand contact to heme.

It belongs to the cytochrome P450 family. It depends on heme as a cofactor.

It is found in the membrane. The protein operates within secondary metabolite biosynthesis; terpenoid biosynthesis. Cytochrome P450 monooxygenase; part of the gene cluster that mediates the biosynthesis of pleuromutilin, a tricyclic diterpene showing antibacterial properties. The geranylgeranyl diphosphate (GGPP) synthase ple4 catalyzes the first step in pleuromutilin biosynthesis. GGPP is then substrate of the premutilin synthase (PS) ple3 to yield premutilin. Premutilin synthase is a bifunctional enzyme composed of the fusion of a class II diterpene cyclase (DTC) and a class I diterpene synthase (DTS), with the corresponding domains and active sites containing characteristic aspartate-rich motifs. GGPP is first converted to mutildienyl-diphosphate (MPP) at the class II DTC site. MPP is subsequently further cyclized at the class I DTS site, followed by a 1,5-hydride shift and addition of water prior to terminating deprotonation, to yield premutilin. The cytochrome P450 monooxygenases ple5 and ple6 hydroxylate premutilin at C-11 and C-3, respectively, producing 11-hydroxypremutilin and 3-hydroxypremutilin. The combination of the actions of both ple5 and ple6 leads to the production of 3,11-dihydroxypremutilin. The short chain dehydrogenase ple7 further converts 3,11-dihydroxypremutilin into mutilin. The acetyltransferase ple2 then acetylates mutilin to produce 14-O-acetylmutilin. Finally, the cytochrome P450 monooxygenase ple1 catalyzes hydroxylation on the alpha position of the acetyl side chain of 14-O-acetylmutilin to yield pleuromutilin. This Rhodocybe pseudopiperita (Clitopilus pseudopiperitus) protein is Cytochrome P450 monooxygenase ple1.